A 389-amino-acid chain; its full sequence is Chalcone synthase E (389 aa).

The active site involves C164.

The protein belongs to the thiolase-like superfamily. Chalcone/stilbene synthases family.

It catalyses the reaction (E)-4-coumaroyl-CoA + 3 malonyl-CoA + 3 H(+) = 2',4,4',6'-tetrahydroxychalcone + 3 CO2 + 4 CoA. It participates in secondary metabolite biosynthesis; flavonoid biosynthesis. Functionally, the primary product of this enzyme is 4,2',4',6'-tetrahydroxychalcone (also termed naringenin-chalcone or chalcone) which can under specific conditions spontaneously isomerize into naringenin. This chain is Chalcone synthase E (CHSE), found in Ipomoea nil (Japanese morning glory).